The following is a 302-amino-acid chain: NAD kinase 2 (302 aa).

The Proton acceptor role is filled by Asp78. NAD(+) is bound by residues 78 to 79 (DG), 152 to 153 (NE), Asp182, 193 to 198 (TAYSLS), and Ala217.

This sequence belongs to the NAD kinase family. The cofactor is a divalent metal cation.

The protein resides in the cytoplasm. The enzyme catalyses NAD(+) + ATP = ADP + NADP(+) + H(+). In terms of biological role, involved in the regulation of the intracellular balance of NAD and NADP, and is a key enzyme in the biosynthesis of NADP. Catalyzes specifically the phosphorylation on 2'-hydroxyl of the adenosine moiety of NAD to yield NADP. This Prochlorococcus marinus (strain SARG / CCMP1375 / SS120) protein is NAD kinase 2.